A 504-amino-acid polypeptide reads, in one-letter code: Maturase K (504 aa).

This sequence belongs to the intron maturase 2 family. MatK subfamily.

It localises to the plastid. The protein resides in the chloroplast. Usually encoded in the trnK tRNA gene intron. Probably assists in splicing its own and other chloroplast group II introns. The chain is Maturase K from Nepenthes alata (Winged pitcher plant).